The chain runs to 312 residues: Mas-related G-protein coupled receptor member B3 (312 aa).

The Extracellular portion of the chain corresponds to 1–31 (MALRTSLITTTAPDKTSLPISICIIKFQVMN). The chain crosses the membrane as a helical span at residues 32–52 (LLSITISPVGMVLNIIVLWFL). Over 53–67 (GFQICRNAFSAYILN) the chain is Cytoplasmic. The helical transmembrane segment at 68 to 88 (LAVADFLFLCSHSIFSFLIVC) threads the bilayer. The Extracellular portion of the chain corresponds to 89-106 (KLHYFLFYIRQLLDTVTM). Residues 107–127 (FAYVFGLSITTIISIECCLSI) traverse the membrane as a helical segment. The Cytoplasmic segment spans residues 128-140 (MWPIWYHCQRPRH). Residues 141-161 (TSAVICVLLWALSLLFPALQM) form a helical membrane-spanning segment. Residues 162 to 180 (EKCSVLFNTFEYSWCGIIN) lie on the Extracellular side of the membrane. A helical transmembrane segment spans residues 181 to 201 (IISGAWLVVLFVVLCGFSLIL). Over 202–220 (LLRISCGSQQIPVTRLNVT) the chain is Cytoplasmic. Residues 221-241 (IALRVLLLLIFGIPFGIFWIV) traverse the membrane as a helical segment. Over 242-259 (DKWNEENFFVRACGFSHH) the chain is Extracellular. Residues 260–280 (ILYVYCINICVNATIYFLVGS) traverse the membrane as a helical segment. Residues 281-312 (IRHGKFQKMTLKLILQRAIQGTPEEEGGERGP) are Cytoplasmic-facing.

This sequence belongs to the G-protein coupled receptor 1 family. Mas subfamily.

The protein resides in the membrane. In terms of biological role, orphan receptor. Probably involved in the function of nociceptive neurons. May regulate nociceptor function and/or development, including the sensation or modulation of pain. The polypeptide is Mas-related G-protein coupled receptor member B3 (Mrgprb3) (Mus musculus (Mouse)).